The primary structure comprises 155 residues: uncharacterized protein (155 aa).

This is an uncharacterized protein from Autographa californica nuclear polyhedrosis virus (AcMNPV).